A 551-amino-acid polypeptide reads, in one-letter code: Formate--tetrahydrofolate ligase (551 aa).

61 to 68 contacts ATP; that stretch reads TPAGEGKS.

Belongs to the formate--tetrahydrofolate ligase family.

It carries out the reaction (6S)-5,6,7,8-tetrahydrofolate + formate + ATP = (6R)-10-formyltetrahydrofolate + ADP + phosphate. Its pathway is one-carbon metabolism; tetrahydrofolate interconversion. The polypeptide is Formate--tetrahydrofolate ligase (Lactiplantibacillus plantarum (strain ATCC BAA-793 / NCIMB 8826 / WCFS1) (Lactobacillus plantarum)).